Reading from the N-terminus, the 185-residue chain is Intraflagellar transport protein 22 homolog (185 aa).

GTP-binding positions include 10–17, 63–67, and 123–126; these read GPCESGKT, DCGGD, and HKPG. Ser137 carries the post-translational modification Phosphoserine.

This sequence belongs to the small GTPase superfamily. Rab family. In terms of assembly, component of the IFT complex B, at least composed of IFT20, IFT22, IFT25, IFT27, IFT46, IFT52, TRAF3IP1/IFT54, IFT57, IFT74, IFT80, IFT81, and IFT88. Interacts with IFT88. Interacts with CFAP61.

The protein resides in the cell projection. The protein localises to the cilium. Its function is as follows. Small GTPase-like component of the intraflagellar transport (IFT) complex B. The sequence is that of Intraflagellar transport protein 22 homolog (Ift22) from Rattus norvegicus (Rat).